The primary structure comprises 635 residues: Threonine--tRNA ligase (635 aa).

The 58-residue stretch at 1–58 (MIHVTCNQEAFELPEGASAMDLANKMKQSHCFAGALINDQEKDLSTTLQDGDTVLFLT) folds into the TGS domain. Residues 237 to 528 (DHRVLGTKLD…LIEHFKGRFP (292 aa)) are catalytic. Residues C328, H379, and H505 each contribute to the Zn(2+) site.

The protein belongs to the class-II aminoacyl-tRNA synthetase family. In terms of assembly, homodimer. Zn(2+) serves as cofactor.

The protein resides in the cytoplasm. The enzyme catalyses tRNA(Thr) + L-threonine + ATP = L-threonyl-tRNA(Thr) + AMP + diphosphate + H(+). Its function is as follows. Catalyzes the attachment of threonine to tRNA(Thr) in a two-step reaction: L-threonine is first activated by ATP to form Thr-AMP and then transferred to the acceptor end of tRNA(Thr). Also edits incorrectly charged L-seryl-tRNA(Thr). In Chlamydia trachomatis serovar A (strain ATCC VR-571B / DSM 19440 / HAR-13), this protein is Threonine--tRNA ligase.